Consider the following 226-residue polypeptide: Deoxyribose-phosphate aldolase (226 aa).

Asp-84 serves as the catalytic Proton donor/acceptor. Catalysis depends on Lys-146, which acts as the Schiff-base intermediate with acetaldehyde. Lys-188 (proton donor/acceptor) is an active-site residue.

This sequence belongs to the DeoC/FbaB aldolase family. DeoC type 1 subfamily.

The protein resides in the cytoplasm. It carries out the reaction 2-deoxy-D-ribose 5-phosphate = D-glyceraldehyde 3-phosphate + acetaldehyde. The protein operates within carbohydrate degradation; 2-deoxy-D-ribose 1-phosphate degradation; D-glyceraldehyde 3-phosphate and acetaldehyde from 2-deoxy-alpha-D-ribose 1-phosphate: step 2/2. Functionally, catalyzes a reversible aldol reaction between acetaldehyde and D-glyceraldehyde 3-phosphate to generate 2-deoxy-D-ribose 5-phosphate. The protein is Deoxyribose-phosphate aldolase of Pyrobaculum arsenaticum (strain DSM 13514 / JCM 11321 / PZ6).